Reading from the N-terminus, the 241-residue chain is Aspartate/glutamate leucyltransferase (241 aa).

This sequence belongs to the R-transferase family. Bpt subfamily.

The protein resides in the cytoplasm. It carries out the reaction N-terminal L-glutamyl-[protein] + L-leucyl-tRNA(Leu) = N-terminal L-leucyl-L-glutamyl-[protein] + tRNA(Leu) + H(+). It catalyses the reaction N-terminal L-aspartyl-[protein] + L-leucyl-tRNA(Leu) = N-terminal L-leucyl-L-aspartyl-[protein] + tRNA(Leu) + H(+). Its function is as follows. Functions in the N-end rule pathway of protein degradation where it conjugates Leu from its aminoacyl-tRNA to the N-termini of proteins containing an N-terminal aspartate or glutamate. In Parvibaculum lavamentivorans (strain DS-1 / DSM 13023 / NCIMB 13966), this protein is Aspartate/glutamate leucyltransferase.